Consider the following 244-residue polypeptide: Short-chain dehydrogenase/reductase family member NovK (244 aa).

NADP(+) is bound by residues 9-12 (GGGE), 59-60 (EL), and 154-158 (RPVLD).

It belongs to the short-chain dehydrogenases/reductases (SDR) family. As to quaternary structure, heterotetramer; the NovJ(2)K(2) heterotetramer is composed of subunits of 2 NovJ and 2 subunits of NovK.

It functions in the pathway antibiotic biosynthesis; novobiocin biosynthesis. In terms of biological role, non-catalytic subunit of the NovJ(2)K(2) heterotetramer that catalyzes the NADPH-dependent reduction of the tyrosyl moiety of L-beta-OH-Tyr-S-NovH intermediate to yield the tethered beta-ketotyrosyl-S-NovH in the novobiocin biosynthesis pathway. Novobiocin is an aminocoumarin family antibiotic that targets bacterial DNA gyrases. This is Short-chain dehydrogenase/reductase family member NovK (novK) from Streptomyces niveus (Streptomyces spheroides).